The sequence spans 90 residues: Small ribosomal subunit protein uS15 (90 aa).

It belongs to the universal ribosomal protein uS15 family. In terms of assembly, part of the 30S ribosomal subunit. Forms a bridge to the 50S subunit in the 70S ribosome, contacting the 23S rRNA.

In terms of biological role, one of the primary rRNA binding proteins, it binds directly to 16S rRNA where it helps nucleate assembly of the platform of the 30S subunit by binding and bridging several RNA helices of the 16S rRNA. Forms an intersubunit bridge (bridge B4) with the 23S rRNA of the 50S subunit in the ribosome. The chain is Small ribosomal subunit protein uS15 from Wolbachia pipientis subsp. Culex pipiens (strain wPip).